The primary structure comprises 487 residues: MISIDLLDNSGTSMPADTSIKLHEVIKFISKSKKMTVLTGAGISCNAGIPDFRSSDGLYNMVKAKHPKAVVRGQDLFDISLFRDEMSLSVFCTFMESLYKSSLNAKPTETHKFIKILKDKNKLLRCYTQNIDCIEQHINLKLGINLQEFDNNKFKQVWNQLDVVQLHGNLHKLSCTNCFSQFNWNEEFQTLLANGLNPECSKCMDKYQQRLYSGKRLTGQTIGLLRPDIVLYGEHHPQMEILTQGLNSDLKSRPDCLIIMGTSLKVAGVKSLVKSLSKIIHNKGGKVIYVNKTKLSASSWKNYIDYEVVSDCDEFVRMLKTEIPDLFLTQEQLDSEKLNQVAVKGSSLNKPIVKPEAKVKIEPGIKQEDAIQYSPEREVTIKQEVNIKQEPIVKREVESVSVKEEPIPTPPTTPHKPKQATKLKRKSPDEISANEVHSRVKRLRPRNDQLSSPASSINGSEEEEEEDEPVAKVLFENARKGITLDQH.

The Deacetylase sirtuin-type domain occupies 15 to 336 (PADTSIKLHE…FLTQEQLDSE (322 aa)). NAD(+) is bound by residues 40–59 (GAGI…DGLY) and 129–132 (QNID). H167 acts as the Proton acceptor in catalysis. Zn(2+) is bound by residues C175, C178, C200, and C203. Residues 261-263 (GTS), 291-293 (NKT), and C312 each bind NAD(+). Positions 397 to 406 (VESVSVKEEP) are enriched in basic and acidic residues. Residues 397–487 (VESVSVKEEP…ARKGITLDQH (91 aa)) form a disordered region. The span at 415-425 (HKPKQATKLKR) shows a compositional bias: basic residues. The span at 448–459 (DQLSSPASSING) shows a compositional bias: polar residues.

This sequence belongs to the sirtuin family. Class I subfamily. Zn(2+) is required as a cofactor.

It is found in the cytoplasm. The protein localises to the nucleus. It carries out the reaction N(6)-acetyl-L-lysyl-[protein] + NAD(+) + H2O = 2''-O-acetyl-ADP-D-ribose + nicotinamide + L-lysyl-[protein]. Functionally, NAD-dependent histone deacetylase, which could function in telomeric silencing, cell cycle progression and chromosome stability. The chain is NAD-dependent histone deacetylase HST3 (HST3) from Candida albicans (strain SC5314 / ATCC MYA-2876) (Yeast).